A 376-amino-acid polypeptide reads, in one-letter code: ATP synthase gamma chain, chloroplastic (376 aa).

The transit peptide at 1 to 52 directs the protein to the chloroplast; it reads MSCSNVTMLVSSKPSLPDASNLSFRSAFNPFQLPSQNSSSSCTPSRPTSIQC. The active site involves cysteine 133. A disulfide bridge links cysteine 250 with cysteine 256.

It belongs to the ATPase gamma chain family. F-type ATPases have 2 components, CF(1) - the catalytic core - and CF(0) - the membrane proton channel. CF(1) has five subunits: alpha(3), beta(3), gamma(1), delta(1), epsilon(1). CF(0) has four main subunits: a, b, b' and c.

It localises to the plastid. It is found in the chloroplast thylakoid membrane. Functionally, produces ATP from ADP in the presence of a proton gradient across the membrane. The gamma chain is believed to be important in regulating ATPase activity and the flow of protons through the CF(0) complex. This chain is ATP synthase gamma chain, chloroplastic (ATPC), found in Pisum sativum (Garden pea).